A 126-amino-acid chain; its full sequence is Large ribosomal subunit protein bL12 (126 aa).

It belongs to the bacterial ribosomal protein bL12 family. In terms of assembly, homodimer. Part of the ribosomal stalk of the 50S ribosomal subunit. Forms a multimeric L10(L12)X complex, where L10 forms an elongated spine to which 2 to 4 L12 dimers bind in a sequential fashion. Binds GTP-bound translation factors.

Forms part of the ribosomal stalk which helps the ribosome interact with GTP-bound translation factors. Is thus essential for accurate translation. The chain is Large ribosomal subunit protein bL12 from Desulfatibacillum aliphaticivorans.